The primary structure comprises 274 residues: NADPH-dependent 7-cyano-7-deazaguanine reductase (274 aa).

80–82 serves as a coordination point for substrate; that stretch reads VES. Position 82-83 (82-83) interacts with NADPH; it reads SK. The Thioimide intermediate role is filled by Cys181. Asp188 functions as the Proton donor in the catalytic mechanism. 220–221 contributes to the substrate binding site; sequence HE. NADPH is bound at residue 249–250; sequence RG.

Belongs to the GTP cyclohydrolase I family. QueF type 2 subfamily. In terms of assembly, homodimer.

The protein resides in the cytoplasm. It catalyses the reaction 7-aminomethyl-7-carbaguanine + 2 NADP(+) = 7-cyano-7-deazaguanine + 2 NADPH + 3 H(+). The protein operates within tRNA modification; tRNA-queuosine biosynthesis. Its function is as follows. Catalyzes the NADPH-dependent reduction of 7-cyano-7-deazaguanine (preQ0) to 7-aminomethyl-7-deazaguanine (preQ1). This chain is NADPH-dependent 7-cyano-7-deazaguanine reductase, found in Burkholderia mallei (strain NCTC 10247).